The chain runs to 441 residues: 4-hydroxybenzoate polyprenyltransferase, mitochondrial (441 aa).

The transit peptide at 1-95 (MLRKLTSNSS…TLGELVLRDY (95 aa)) directs the protein to the mitochondrion. 8 helical membrane passes run 129–149 (IGSW…APAG), 154–174 (LWTL…GCTI), 204–224 (AWFF…ELNW), 225–245 (YSIV…LMKR), 246–266 (ITHW…LLGW), 271–291 (GSVM…WTIV), 322–342 (LWLS…GMVC), and 378–398 (FISN…GTLY). The segment at 405–441 (AGKSSTTSSSSTSSSSSPSSGLLLAATNHHQPARQAS) is disordered. Positions 408 to 424 (SSTTSSSSTSSSSSPSS) are enriched in low complexity. Residues 432–441 (NHHQPARQAS) are compositionally biased toward polar residues.

It belongs to the UbiA prenyltransferase family. The cofactor is Mg(2+).

It localises to the mitochondrion inner membrane. It catalyses the reaction an all-trans-polyprenyl diphosphate + 4-hydroxybenzoate = a 4-hydroxy-3-(all-trans-polyprenyl)benzoate + diphosphate. Its pathway is cofactor biosynthesis; ubiquinone biosynthesis. Catalyzes the prenylation of para-hydroxybenzoate (PHB) with an all-trans polyprenyl group. Mediates the second step in the final reaction sequence of coenzyme Q (CoQ) biosynthesis, which is the condensation of the polyisoprenoid side chain with PHB, generating the first membrane-bound Q intermediate. The chain is 4-hydroxybenzoate polyprenyltransferase, mitochondrial from Aedes aegypti (Yellowfever mosquito).